A 1486-amino-acid chain; its full sequence is Protein PRRC2B (1486 aa).

Disordered regions lie at residues 1–20 (MSDR…KYST), 39–306 (VIPR…FPLP), 320–341 (QMND…PLRQ), 385–519 (KFSD…AREE), and 531–658 (LDQK…EQLY). The span at 88–137 (ANKQDQQDPKSSSVTASQPPESQPQPGLQKSVSNLQKPTQSISQENTNSV) shows a compositional bias: polar residues. Residues S166, S168, S222, and S226 each carry the phosphoserine modification. The span at 219 to 235 (SAASLSASPTELGSRNA) shows a compositional bias: polar residues. T228 carries the post-translational modification Phosphothreonine. K251 is covalently cross-linked (Glycyl lysine isopeptide (Lys-Gly) (interchain with G-Cter in SUMO2)). Over residues 288–300 (SPQSSENQTTVER) the composition is skewed to polar residues. 2 positions are modified to phosphoserine: S387 and S415. Basic and acidic residues-rich tracts occupy residues 422–433 (TDAKRTQEEGKD), 478–488 (HSAEDKEDKPP), and 501–519 (AVER…AREE). S479 is modified (phosphoserine). Residues 494–544 (IQSEMSEAVERARKRREEEERRAREERLAACAAKLKQLDQKCRQAQKANET) are a coiled coil. Residue S555 is modified to Phosphoserine. Residues 600–611 (SNSSSSSSSSSS) show a composition bias toward low complexity. Residue S621 is modified to Phosphoserine. The span at 638–656 (QRQQQQQQQQQQQQQQQEQ) shows a compositional bias: low complexity. A Glycyl lysine isopeptide (Lys-Gly) (interchain with G-Cter in SUMO2) cross-link involves residue K751. T753 is subject to Phosphothreonine. 2 positions are modified to phosphoserine: S762 and S793. Disordered regions lie at residues 792-847 (RSPD…EARK), 893-918 (EERR…IPPR), and 950-1080 (ALPV…PGAV). Positions 880–904 (IEVLTKKQRRLLEEERRKKEQAAQV) form a coiled coil. A compositionally biased stretch (polar residues) spans 960–986 (SWRTAVTAFSSTEPGTSEQGFKSSQGD). Residues 998 to 1007 (SSATSSQRSS) are compositionally biased toward low complexity. 2 stretches are compositionally biased toward basic and acidic residues: residues 1025–1055 (SKAD…EHRP) and 1062–1074 (RSLK…EGAE). S1070 and S1159 each carry phosphoserine. Disordered stretches follow at residues 1177–1205 (KAWE…SSVG), 1410–1443 (QSIQ…TSRE), and 1455–1486 (ADSK…AWEP). Residues 1181–1191 (NSPSLPEQSSP) are compositionally biased toward polar residues. Over residues 1410–1421 (QSIQLPPGQSLS) the composition is skewed to low complexity. Polar residues predominate over residues 1457–1474 (SKQNVPTGGSAPSPQAYR).

The protein is Protein PRRC2B (Prrc2b) of Mus musculus (Mouse).